The primary structure comprises 396 residues: MAKKTILDLRDEDLKGKRVLVRVDFNVPLKNGVITDDRRIREALPTIKYLMDKGAKVILVSHLGRPKGFQDDLRLDPVAKRLSELLGKPVKKLNDCIGEEVEREISNMKEGDVILLENIRFYKEEEANDPEFAKKLASLADLYVNDAFGTAHRAHASTAGVAQYIPGVAGLLMKKEIEIMGKALESPERPFICILGGAKVSDKIGVIKNLMNKVDGFLIGGGMMFTFLKALGYEIGKSIVEEDKLDLAREIMNMAKERGIQFLLPKDAVVVKEIKEDAPTSIKDIDKFEKDDIGVDIGPKTIELFREEILKAKTIIWNGPMGIFEIPAFANGTRKIAEAIAENRNCVSIVGGGDSAAAIQTLGLEDKFTHISTGGGASLEFLEGKELPGVAVLQDK.

Residues 24-26, R39, 62-65, R120, and R153 contribute to the substrate site; these read DFN and HLGR. ATP contacts are provided by residues K203, G294, E325, and 352 to 355; that span reads GGDS.

It belongs to the phosphoglycerate kinase family. In terms of assembly, monomer.

The protein resides in the cytoplasm. The catalysed reaction is (2R)-3-phosphoglycerate + ATP = (2R)-3-phospho-glyceroyl phosphate + ADP. It participates in carbohydrate degradation; glycolysis; pyruvate from D-glyceraldehyde 3-phosphate: step 2/5. The protein is Phosphoglycerate kinase of Dictyoglomus turgidum (strain DSM 6724 / Z-1310).